A 407-amino-acid polypeptide reads, in one-letter code: Phospholipase A1-II 7 (407 aa).

The Acyl-ester intermediate role is filled by Ser-230. Catalysis depends on charge relay system residues Ser-230, Asp-299, and His-336.

This sequence belongs to the AB hydrolase superfamily. Lipase family.

The protein localises to the cytoplasm. In terms of biological role, acylhydrolase that catalyzes the hydrolysis of phospholipids at the sn-1 position. This Oryza sativa subsp. indica (Rice) protein is Phospholipase A1-II 7.